A 400-amino-acid chain; its full sequence is MVSCQGTRPCIVNLLTMPSEDKLGEEISTRVINEYSKLKSACRPIIRPSGIREWTILAGVAAINRDGGANKIEILSIATGVKALPDSELQRSEGKILHDCHAEILALRGANTVLLNRIQNYNPSSGDKFIQHNDEIPARFNLKENWELALYISRLPCGDASMSFLNDNCKNDDFIKIEDSDEFQYVDRSVKTILRGRLNFNRRNVVRTKPGRYDSNITLSKSCSDKLLMKQRSSVLNCLNYELFEKPVFLKYIVIPNLEDETKHHLEQSFHTRLPNLDNEIKFLNCLKPFYDDKLDEEDVPGLMCSVKLFMDDFSTEEAILNGVRNGFYTKSSKPLRKHCQSQVSRFAQWELFKKIRPEYEGISYLEFKSRQKKRSQLIIAIKNILSPDGWIPTRTDDVK.

The 325-residue stretch at 76-400 (SIATGVKALP…WIPTRTDDVK (325 aa)) folds into the A to I editase domain. Residue H101 participates in Zn(2+) binding. E103 acts as the Proton donor in catalysis. R108 contacts 1D-myo-inositol hexakisphosphate. C157 and C223 together coordinate Zn(2+). Residues K226, R232, K369, and R375 each coordinate 1D-myo-inositol hexakisphosphate.

It belongs to the ADAT1 family. It depends on 1D-myo-inositol hexakisphosphate as a cofactor. Zn(2+) serves as cofactor.

It catalyses the reaction adenosine(37) in tRNA(Ala) + H2O + H(+) = inosine(37) in tRNA(Ala) + NH4(+). Deaminates adenosine-37 to inosine in tRNA-Ala. In Saccharomyces cerevisiae (strain ATCC 204508 / S288c) (Baker's yeast), this protein is tRNA-specific adenosine deaminase 1 (TAD1).